The sequence spans 507 residues: Maturase K (507 aa).

Belongs to the intron maturase 2 family. MatK subfamily.

The protein resides in the plastid. The protein localises to the chloroplast. Usually encoded in the trnK tRNA gene intron. Probably assists in splicing its own and other chloroplast group II introns. The polypeptide is Maturase K (Humulus lupulus (European hop)).